Consider the following 136-residue polypeptide: Large ribosomal subunit protein uL16 (136 aa).

It belongs to the universal ribosomal protein uL16 family. As to quaternary structure, part of the 50S ribosomal subunit.

Binds 23S rRNA and is also seen to make contacts with the A and possibly P site tRNAs. In Vesicomyosocius okutanii subsp. Calyptogena okutanii (strain HA), this protein is Large ribosomal subunit protein uL16.